A 295-amino-acid polypeptide reads, in one-letter code: Ribosomal RNA small subunit methyltransferase A (295 aa).

6 residues coordinate S-adenosyl-L-methionine: Asn33, Val35, Gly60, Glu81, Asp111, and Asn129.

Belongs to the class I-like SAM-binding methyltransferase superfamily. rRNA adenine N(6)-methyltransferase family. RsmA subfamily.

The protein localises to the cytoplasm. It catalyses the reaction adenosine(1518)/adenosine(1519) in 16S rRNA + 4 S-adenosyl-L-methionine = N(6)-dimethyladenosine(1518)/N(6)-dimethyladenosine(1519) in 16S rRNA + 4 S-adenosyl-L-homocysteine + 4 H(+). Functionally, specifically dimethylates two adjacent adenosines (A1518 and A1519) in the loop of a conserved hairpin near the 3'-end of 16S rRNA in the 30S particle. May play a critical role in biogenesis of 30S subunits. This chain is Ribosomal RNA small subunit methyltransferase A, found in Streptomyces avermitilis (strain ATCC 31267 / DSM 46492 / JCM 5070 / NBRC 14893 / NCIMB 12804 / NRRL 8165 / MA-4680).